Here is a 905-residue protein sequence, read N- to C-terminus: Gamma-tubulin complex component 2 (905 aa).

At Tyr-83 the chain carries Phosphotyrosine. Residues 877-905 form a disordered region; the sequence is AERSQKAAPQVPVPRGPSAPAPRVAIPAQ. A compositionally biased stretch (pro residues) spans 887–896; the sequence is VPVPRGPSAP.

Belongs to the TUBGCP family. As to quaternary structure, component of the gamma-tubulin ring complex (gTuRC) consisting of TUBGCP2, TUBGCP3, TUBGCP4, TUBGCP5 and TUBGCP6 and gamma-tubulin TUBG1 or TUBG2. TUBGCP2, TUBGCP3, TUBGCP4, TUBGCP5 and TUBGCP6 assemble in a 5:5:2:1:1 stoichiometry; each is associated with a gamma-tubulin, thereby arranging 14 gamma-tubulins in a helical manner. Gamma-tubulin at the first position is blocked by TUBGCP3 at the last position, allowing 13 protafilaments to grow into a microtubule. The gTuRC (via TUBGCP3 and TUBGCP6) interacts with ACTB and MZT1; the interactions form a luminal bridge that stabilizes the initial structure during complex assembly. The gTuRC (via TUBGCP2) interacts with MZT2A/MZT2B and CDK5RAP2 (via CM1 motif); the interactions play a role in gTuRC activation. Interacts with ATF5; the ATF5:PCNT:polyglutamylated tubulin (PGT) tripartite unites the mother centriole and the pericentriolar material (PCM) in the centrosome.

The protein resides in the cytoplasm. Its subcellular location is the cytoskeleton. The protein localises to the microtubule organizing center. It localises to the centrosome. Component of the gamma-tubulin ring complex (gTuRC) which mediates microtubule nucleation. The gTuRC regulates the minus-end nucleation of alpha-beta tubulin heterodimers that grow into microtubule protafilaments, a critical step in centrosome duplication and spindle formation. Plays a role in neuronal migration. This Mus musculus (Mouse) protein is Gamma-tubulin complex component 2 (Tubgcp2).